We begin with the raw amino-acid sequence, 293 residues long: Decaprenyl diphosphate synthase (293 aa).

The interval 1–24 (MATTRGKKTYPQLPPAPDDYPTFP) is disordered. Asp-73 is an active-site residue. Asp-73 is a binding site for Mg(2+). Residues 74–77 (GNGR), Trp-78, Arg-86, His-90, and 118–120 (STE) contribute to the substrate site. Asn-121 functions as the Proton acceptor in the catalytic mechanism. Substrate-binding positions include Trp-122, Arg-124, Arg-241, and 247-249 (RAS). Glu-260 provides a ligand contact to Mg(2+).

This sequence belongs to the UPP synthase family. As to quaternary structure, homodimer. Requires Mg(2+) as cofactor.

The protein resides in the cell membrane. It catalyses the reaction (2Z,6E)-farnesyl diphosphate + 7 isopentenyl diphosphate = (2Z,6Z,10Z,14Z,18Z,22Z,26Z,30Z,34E)-decaprenyl diphosphate + 7 diphosphate. The catalysed reaction is n isopentenyl diphosphate + (2E,6E)-farnesyl diphosphate = a di-trans,poly-cis-polyprenyl diphosphate + n diphosphate. In terms of biological role, catalyzes the sequential condensation of isopentenyl diphosphate (IPP) in the cis configuration with (2Z,6E)-farnesyl diphosphate (Z-FPP or EZ-FPP) generating the 50 carbon product trans,polycis-decaprenyl diphosphate. When (2E,6E)-farnesyl diphosphate (E-FPP or EE-FPP) is used in vitro, both primary products decaprenyl diphosphate and heptaprenyl diphosphate are synthesized. It is probably due to the fact that M.smegmatis synthesizes both (2E,6E,10E)-geranylgeranyl diphosphate (EEE-GGPP) and (2E,6E,10Z)-geranylgeranyl diphosphate (EEZ-GGPP). Can also accept many different allylic substrates, including E-geranyl diphosphate (E-GPP), neryl diphosphate (NPP), and all-trans-geranyl-geranyl diphosphate. This is Decaprenyl diphosphate synthase (uppS) from Mycolicibacterium smegmatis (strain ATCC 700084 / mc(2)155) (Mycobacterium smegmatis).